The primary structure comprises 404 residues: Immediate early response gene 5-like protein (404 aa).

3 disordered regions span residues 86 to 107, 160 to 231, and 308 to 327; these read AADF…EPAA, AALQ…APAS, and QEEE…EPPG. Residues 177–194 show a composition bias toward pro residues; that stretch reads PLQPGPAPLPLPLPPPAP. The span at 195–231 shows a compositional bias: low complexity; that stretch reads AALCPRDPRAPAACSAPPGAAPPAAAASPPASPAPAS. The span at 308–318 shows a compositional bias: acidic residues; sequence QEEEEDDEEDA.

The protein belongs to the IER family.

In Homo sapiens (Human), this protein is Immediate early response gene 5-like protein (IER5L).